Reading from the N-terminus, the 258-residue chain is Coiled-coil domain-containing protein 127 (258 aa).

A coiled-coil region spans residues 50–170 (KEIEKEKEAC…EEALAERQSI (121 aa)).

This Sus scrofa (Pig) protein is Coiled-coil domain-containing protein 127 (CCDC127).